Consider the following 425-residue polypeptide: Serine hydroxymethyltransferase (425 aa).

Residues Leu-128 and 132-134 (GHL) contribute to the (6S)-5,6,7,8-tetrahydrofolate site. Lys-237 carries the post-translational modification N6-(pyridoxal phosphate)lysine.

It belongs to the SHMT family. As to quaternary structure, homodimer. Requires pyridoxal 5'-phosphate as cofactor.

It is found in the cytoplasm. It catalyses the reaction (6R)-5,10-methylene-5,6,7,8-tetrahydrofolate + glycine + H2O = (6S)-5,6,7,8-tetrahydrofolate + L-serine. It functions in the pathway one-carbon metabolism; tetrahydrofolate interconversion. Its pathway is amino-acid biosynthesis; glycine biosynthesis; glycine from L-serine: step 1/1. Its function is as follows. Catalyzes the reversible interconversion of serine and glycine with tetrahydrofolate (THF) serving as the one-carbon carrier. This reaction serves as the major source of one-carbon groups required for the biosynthesis of purines, thymidylate, methionine, and other important biomolecules. Also exhibits THF-independent aldolase activity toward beta-hydroxyamino acids, producing glycine and aldehydes, via a retro-aldol mechanism. This Wolbachia sp. subsp. Drosophila simulans (strain wRi) protein is Serine hydroxymethyltransferase.